Consider the following 424-residue polypeptide: UDP-N-acetylglucosamine 1-carboxyvinyltransferase (424 aa).

22-23 is a binding site for phosphoenolpyruvate; it reads KN. Residue arginine 93 coordinates UDP-N-acetyl-alpha-D-glucosamine. Catalysis depends on cysteine 117, which acts as the Proton donor. Cysteine 117 bears the 2-(S-cysteinyl)pyruvic acid O-phosphothioketal mark. UDP-N-acetyl-alpha-D-glucosamine is bound by residues 122-126, 162-165, aspartate 307, and isoleucine 329; these read RPVDL and KVSV.

It belongs to the EPSP synthase family. MurA subfamily.

It is found in the cytoplasm. The catalysed reaction is phosphoenolpyruvate + UDP-N-acetyl-alpha-D-glucosamine = UDP-N-acetyl-3-O-(1-carboxyvinyl)-alpha-D-glucosamine + phosphate. Its pathway is cell wall biogenesis; peptidoglycan biosynthesis. Functionally, cell wall formation. Adds enolpyruvyl to UDP-N-acetylglucosamine. This is UDP-N-acetylglucosamine 1-carboxyvinyltransferase from Haemophilus influenzae (strain PittEE).